Here is a 296-residue protein sequence, read N- to C-terminus: MAWIQLRLNSTNEKAEKISEYLEEIGAVSVTFMDSQDTPIFEPLPGETRLWGNTDVIALFDAKTNMQQIVRLLQQKNHLDENTAYKIEQIEDKDWEREWMDNFHPMKFGKRLWICPSWREIPDENAINVMLDPGLAFGTGTHPTTALCLEWLDSLDLTGKTVIDFGCGSGILAIAALKLGAKSAVGIDIDPQAILASYNNAEQNGVAERLQLFLSEEKPTDLQADVVIANILAGPLKELYPIISNLVKPQGDLGLSGILSTQADSVCEAYQGKFTLDPITEREEWCRITGKLNSFV.

Positions 145, 166, 188, and 230 each coordinate S-adenosyl-L-methionine.

This sequence belongs to the methyltransferase superfamily. PrmA family.

It is found in the cytoplasm. It carries out the reaction L-lysyl-[protein] + 3 S-adenosyl-L-methionine = N(6),N(6),N(6)-trimethyl-L-lysyl-[protein] + 3 S-adenosyl-L-homocysteine + 3 H(+). Functionally, methylates ribosomal protein L11. The chain is Ribosomal protein L11 methyltransferase from Histophilus somni (strain 2336) (Haemophilus somnus).